Reading from the N-terminus, the 503-residue chain is ATP synthase subunit alpha (503 aa).

Residue 170 to 177 (GDKQTGKT) coordinates ATP.

The protein belongs to the ATPase alpha/beta chains family. In terms of assembly, F-type ATPases have 2 components, CF(1) - the catalytic core - and CF(0) - the membrane proton channel. CF(1) has five subunits: alpha(3), beta(3), gamma(1), delta(1), epsilon(1). CF(0) has three main subunits: a(1), b(2) and c(9-12). The alpha and beta chains form an alternating ring which encloses part of the gamma chain. CF(1) is attached to CF(0) by a central stalk formed by the gamma and epsilon chains, while a peripheral stalk is formed by the delta and b chains.

The protein localises to the cell inner membrane. The catalysed reaction is ATP + H2O + 4 H(+)(in) = ADP + phosphate + 5 H(+)(out). Its function is as follows. Produces ATP from ADP in the presence of a proton gradient across the membrane. The alpha chain is a regulatory subunit. The protein is ATP synthase subunit alpha of Helicobacter pylori (strain J99 / ATCC 700824) (Campylobacter pylori J99).